The following is a 95-amino-acid chain: Large ribosomal subunit protein uL23 (95 aa).

Belongs to the universal ribosomal protein uL23 family. Part of the 50S ribosomal subunit. Contacts protein L29, and trigger factor when it is bound to the ribosome.

Its function is as follows. One of the early assembly proteins it binds 23S rRNA. One of the proteins that surrounds the polypeptide exit tunnel on the outside of the ribosome. Forms the main docking site for trigger factor binding to the ribosome. The sequence is that of Large ribosomal subunit protein uL23 from Syntrophotalea carbinolica (strain DSM 2380 / NBRC 103641 / GraBd1) (Pelobacter carbinolicus).